We begin with the raw amino-acid sequence, 336 residues long: NADH-quinone oxidoreductase subunit H (336 aa).

Transmembrane regions (helical) follow at residues 4 to 24, 75 to 95, 108 to 128, 154 to 174, 181 to 201, 233 to 253, 272 to 292, and 308 to 328; these read YILW…LVVA, YLFF…WAVI, LGLL…VIAG, MGFA…TGII, IWHW…IAGI, LFFL…SIMF, FVPG…MFLW, and LGWK…ACMV.

Belongs to the complex I subunit 1 family. As to quaternary structure, NDH-1 is composed of 14 different subunits. Subunits NuoA, H, J, K, L, M, N constitute the membrane sector of the complex.

It is found in the cell inner membrane. It carries out the reaction a quinone + NADH + 5 H(+)(in) = a quinol + NAD(+) + 4 H(+)(out). NDH-1 shuttles electrons from NADH, via FMN and iron-sulfur (Fe-S) centers, to quinones in the respiratory chain. The immediate electron acceptor for the enzyme in this species is believed to be ubiquinone. Couples the redox reaction to proton translocation (for every two electrons transferred, four hydrogen ions are translocated across the cytoplasmic membrane), and thus conserves the redox energy in a proton gradient. This subunit may bind ubiquinone. The chain is NADH-quinone oxidoreductase subunit H from Francisella tularensis subsp. tularensis (strain FSC 198).